Here is a 49-residue protein sequence, read N- to C-terminus: Large ribosomal subunit protein bL33 (49 aa).

The protein belongs to the bacterial ribosomal protein bL33 family.

This Syntrophus aciditrophicus (strain SB) protein is Large ribosomal subunit protein bL33.